Consider the following 332-residue polypeptide: Ketol-acid reductoisomerase (NADP(+)) (332 aa).

One can recognise a KARI N-terminal Rossmann domain in the interval 1–182 (MATIYYEKDA…GCTRAGVLAT (182 aa)). Residues 25–28 (YGSQ), R48, S53, and 83–86 (DELQ) contribute to the NADP(+) site. Residue H108 is part of the active site. Residue G134 participates in NADP(+) binding. The KARI C-terminal knotted domain occupies 183-328 (TFKEETETDL…KELRSMMPWL (146 aa)). Residues D191, E195, E227, and E231 each coordinate Mg(2+). S252 provides a ligand contact to substrate.

The protein belongs to the ketol-acid reductoisomerase family. Mg(2+) serves as cofactor.

It carries out the reaction (2R)-2,3-dihydroxy-3-methylbutanoate + NADP(+) = (2S)-2-acetolactate + NADPH + H(+). The enzyme catalyses (2R,3R)-2,3-dihydroxy-3-methylpentanoate + NADP(+) = (S)-2-ethyl-2-hydroxy-3-oxobutanoate + NADPH + H(+). It functions in the pathway amino-acid biosynthesis; L-isoleucine biosynthesis; L-isoleucine from 2-oxobutanoate: step 2/4. The protein operates within amino-acid biosynthesis; L-valine biosynthesis; L-valine from pyruvate: step 2/4. Functionally, involved in the biosynthesis of branched-chain amino acids (BCAA). Catalyzes an alkyl-migration followed by a ketol-acid reduction of (S)-2-acetolactate (S2AL) to yield (R)-2,3-dihydroxy-isovalerate. In the isomerase reaction, S2AL is rearranged via a Mg-dependent methyl migration to produce 3-hydroxy-3-methyl-2-ketobutyrate (HMKB). In the reductase reaction, this 2-ketoacid undergoes a metal-dependent reduction by NADPH to yield (R)-2,3-dihydroxy-isovalerate. This is Ketol-acid reductoisomerase (NADP(+)) from Methanocella arvoryzae (strain DSM 22066 / NBRC 105507 / MRE50).